We begin with the raw amino-acid sequence, 258 residues long: Type III pantothenate kinase (258 aa).

9 to 16 (DIGNTSVN) is an ATP binding site. 110 to 113 (GADR) contacts substrate. Asp112 (proton acceptor) is an active-site residue. Asp132 is a binding site for K(+). Position 135 (Thr135) interacts with ATP. Thr187 contributes to the substrate binding site.

Belongs to the type III pantothenate kinase family. In terms of assembly, homodimer. NH4(+) serves as cofactor. It depends on K(+) as a cofactor.

It is found in the cytoplasm. It carries out the reaction (R)-pantothenate + ATP = (R)-4'-phosphopantothenate + ADP + H(+). It participates in cofactor biosynthesis; coenzyme A biosynthesis; CoA from (R)-pantothenate: step 1/5. In terms of biological role, catalyzes the phosphorylation of pantothenate (Pan), the first step in CoA biosynthesis. This chain is Type III pantothenate kinase, found in Dehalococcoides mccartyi (strain ATCC BAA-2266 / KCTC 15142 / 195) (Dehalococcoides ethenogenes (strain 195)).